The chain runs to 329 residues: DNA-directed RNA polymerase subunit alpha (329 aa).

Positions 1–234 (MQGSVTEFLR…EQLDAFVELR (234 aa)) are alpha N-terminal domain (alpha-NTD). Residues 248–329 (FDPILLRPVD…WPPASLVDDL (82 aa)) are alpha C-terminal domain (alpha-CTD).

Belongs to the RNA polymerase alpha chain family. In terms of assembly, homodimer. The RNAP catalytic core consists of 2 alpha, 1 beta, 1 beta' and 1 omega subunit. When a sigma factor is associated with the core the holoenzyme is formed, which can initiate transcription.

It catalyses the reaction RNA(n) + a ribonucleoside 5'-triphosphate = RNA(n+1) + diphosphate. DNA-dependent RNA polymerase catalyzes the transcription of DNA into RNA using the four ribonucleoside triphosphates as substrates. The sequence is that of DNA-directed RNA polymerase subunit alpha from Shewanella violacea (strain JCM 10179 / CIP 106290 / LMG 19151 / DSS12).